The primary structure comprises 472 residues: Forkhead box protein H1 (472 aa).

The disordered stretch occupies residues 36–56; it reads SSKRSCHRSSNPLLELGGRLD. Positions 97–193 form a DNA-binding region, fork-head; that stretch reads KPPYSYLAMI…LKRQNTAVSR (97 aa). Disordered stretches follow at residues 211 to 246 and 261 to 360; these read YSQPNKSKPLPPESSLPPVPTRQSPPPSEDPYRPKL and PASS…LPTS. The span at 219 to 239 shows a compositional bias: pro residues; that stretch reads PLPPESSLPPVPTRQSPPPSE. The span at 294–310 shows a compositional bias: low complexity; sequence ASYNGSSSASSVSPASD. The SMAD-interaction domain (SID) stretch occupies residues 339–465; the sequence is SCPPPNKSSK…PNQYALQNGP (127 aa). The Fast/FoxH1 motif 1 (FM1) signature appears at 357-361; sequence LPTSY. Residues 367–373 carry the Fast/FoxH1 motif 2 (FM2) motif; the sequence is PNAVAPP. An SMAD interaction motif (SIM) motif is present at residues 428–448; that stretch reads LDSMLQSVPPNKSVFDALGSN.

It is found in the nucleus. Its function is as follows. Transcriptional activator. Activates an activin response element (ARE). Recognizes and binds to the DNA sequence 5'-TGT[GT][GT]ATT-3'. Modulator of nodal signaling required for organizer formation. Also required for the development of dorsal axial structures and left-right symmetry. In Danio rerio (Zebrafish), this protein is Forkhead box protein H1 (foxh1).